We begin with the raw amino-acid sequence, 34 residues long: Photosystem II reaction center protein M (34 aa).

The helical transmembrane segment at 5–25 threads the bilayer; the sequence is ILAFIATALFILVPTAFLLII.

Belongs to the PsbM family. In terms of assembly, PSII is composed of 1 copy each of membrane proteins PsbA, PsbB, PsbC, PsbD, PsbE, PsbF, PsbH, PsbI, PsbJ, PsbK, PsbL, PsbM, PsbT, PsbX, PsbY, PsbZ, Psb30/Ycf12, at least 3 peripheral proteins of the oxygen-evolving complex and a large number of cofactors. It forms dimeric complexes.

The protein localises to the plastid. Its subcellular location is the chloroplast thylakoid membrane. One of the components of the core complex of photosystem II (PSII). PSII is a light-driven water:plastoquinone oxidoreductase that uses light energy to abstract electrons from H(2)O, generating O(2) and a proton gradient subsequently used for ATP formation. It consists of a core antenna complex that captures photons, and an electron transfer chain that converts photonic excitation into a charge separation. This subunit is found at the monomer-monomer interface. In Calycanthus floridus var. glaucus (Eastern sweetshrub), this protein is Photosystem II reaction center protein M.